A 270-amino-acid polypeptide reads, in one-letter code: Thiazole synthase (270 aa).

Residue Lys111 is the Schiff-base intermediate with DXP of the active site. Residues Gly172, 198–199 (AG), and 220–221 (NS) each bind 1-deoxy-D-xylulose 5-phosphate. Positions 249 to 270 (AGRLPTRAQASPSSPTTGKVND) are disordered. The span at 256–270 (AQASPSSPTTGKVND) shows a compositional bias: polar residues.

Belongs to the ThiG family. Homotetramer. Forms heterodimers with either ThiH or ThiS.

The protein resides in the cytoplasm. It catalyses the reaction [ThiS sulfur-carrier protein]-C-terminal-Gly-aminoethanethioate + 2-iminoacetate + 1-deoxy-D-xylulose 5-phosphate = [ThiS sulfur-carrier protein]-C-terminal Gly-Gly + 2-[(2R,5Z)-2-carboxy-4-methylthiazol-5(2H)-ylidene]ethyl phosphate + 2 H2O + H(+). It participates in cofactor biosynthesis; thiamine diphosphate biosynthesis. Functionally, catalyzes the rearrangement of 1-deoxy-D-xylulose 5-phosphate (DXP) to produce the thiazole phosphate moiety of thiamine. Sulfur is provided by the thiocarboxylate moiety of the carrier protein ThiS. In vitro, sulfur can be provided by H(2)S. The chain is Thiazole synthase from Synechococcus sp. (strain WH7803).